The following is a 153-amino-acid chain: MSYHSFSLEPKYENTMLSQRFKEIDKLFSTLSGKKIISDSVPPYDILQLKENFYKLIVSVPGYLEKNLEISTQYDQLIIIGKKEITENTNEKKETVEKILHQEIYTGDFSLSFRLNERISVMSATLDQGLLTIYFEYQIPEKQKIQKIQINVK.

The sHSP domain occupies 35–153; it reads KIISDSVPPY…KIQKIQINVK (119 aa).

Belongs to the small heat shock protein (HSP20) family.

The polypeptide is Small heat shock protein ibp (ibp) (Buchnera aphidicola subsp. Thelaxes suberi).